The sequence spans 193 residues: NADH-quinone oxidoreductase subunit B (193 aa).

Cys-72, Cys-73, Cys-137, and Cys-167 together coordinate [4Fe-4S] cluster.

The protein belongs to the complex I 20 kDa subunit family. NDH-1 is composed of 14 different subunits. Subunits NuoB, C, D, E, F, and G constitute the peripheral sector of the complex. The cofactor is [4Fe-4S] cluster.

Its subcellular location is the cell inner membrane. It catalyses the reaction a quinone + NADH + 5 H(+)(in) = a quinol + NAD(+) + 4 H(+)(out). Functionally, NDH-1 shuttles electrons from NADH, via FMN and iron-sulfur (Fe-S) centers, to quinones in the respiratory chain. The immediate electron acceptor for the enzyme in this species is believed to be ubiquinone. Couples the redox reaction to proton translocation (for every two electrons transferred, four hydrogen ions are translocated across the cytoplasmic membrane), and thus conserves the redox energy in a proton gradient. The chain is NADH-quinone oxidoreductase subunit B from Bartonella bacilliformis (strain ATCC 35685 / KC583 / Herrer 020/F12,63).